Consider the following 54-residue polypeptide: UPF0391 membrane protein R00741 (54 aa).

The next 2 helical transmembrane spans lie at 5-25 (ALVF…GIAG) and 30-50 (IAQV…VAGL).

Belongs to the UPF0391 family.

It is found in the cell membrane. This Rhizobium meliloti (strain 1021) (Ensifer meliloti) protein is UPF0391 membrane protein R00741.